A 492-amino-acid chain; its full sequence is Ribose import ATP-binding protein RbsA (492 aa).

2 consecutive ABC transporter domains span residues 3-239 (IDMR…VGRK) and 238-492 (RKLE…TGGK). Position 35–42 (35–42 (GENGAGKS)) interacts with ATP.

The protein belongs to the ABC transporter superfamily. Ribose importer (TC 3.A.1.2.1) family. As to quaternary structure, the complex is composed of an ATP-binding protein (RbsA), two transmembrane proteins (RbsC) and a solute-binding protein (RbsB).

It is found in the cell membrane. The catalysed reaction is D-ribose(out) + ATP + H2O = D-ribose(in) + ADP + phosphate + H(+). Functionally, part of the ABC transporter complex RbsABC involved in ribose import. Responsible for energy coupling to the transport system. In Streptococcus agalactiae serotype V (strain ATCC BAA-611 / 2603 V/R), this protein is Ribose import ATP-binding protein RbsA.